Reading from the N-terminus, the 332-residue chain is Ferredoxin--NADP reductase 2 (332 aa).

The FAD site is built by Glu37, Gln45, Tyr50, Val90, Phe124, Asp285, and Thr326.

Belongs to the ferredoxin--NADP reductase type 2 family. Homodimer. Requires FAD as cofactor.

The enzyme catalyses 2 reduced [2Fe-2S]-[ferredoxin] + NADP(+) + H(+) = 2 oxidized [2Fe-2S]-[ferredoxin] + NADPH. The polypeptide is Ferredoxin--NADP reductase 2 (yumC) (Bacillus subtilis (strain 168)).